The following is a 445-amino-acid chain: UPF0210 protein SEQ_0468 (445 aa).

The protein belongs to the UPF0210 family. Homodimer.

This Streptococcus equi subsp. equi (strain 4047) protein is UPF0210 protein SEQ_0468.